Consider the following 370-residue polypeptide: Glucan endo-1,3-beta-glucosidase, basic vacuolar isoform GLB (370 aa).

The first 32 residues, Met1–Ala32, serve as a signal peptide directing secretion. Gln33 is subject to Pyrrolidone carboxylic acid. The active-site Proton donor is Glu128. Glu273 functions as the Nucleophile in the catalytic mechanism. The propeptide at Val349 to Met370 is removed in mature form. N-linked (GlcNAc...) asparagine glycosylation is present at Asn361.

The protein belongs to the glycosyl hydrolase 17 family. Is expressed primarily in epidermal cell of healthy plant, and following induction by ethylene, accumulates in mesophyll cells.

It is found in the vacuole. The enzyme catalyses Hydrolysis of (1-&gt;3)-beta-D-glucosidic linkages in (1-&gt;3)-beta-D-glucans.. In terms of biological role, implicated in the defense of plants against pathogens. This Nicotiana tabacum (Common tobacco) protein is Glucan endo-1,3-beta-glucosidase, basic vacuolar isoform GLB.